An 874-amino-acid chain; its full sequence is Probable RNA-directed RNA polymerase (874 aa).

Belongs to the totiviridae RNA-directed RNA polymerase family.

It catalyses the reaction RNA(n) + a ribonucleoside 5'-triphosphate = RNA(n+1) + diphosphate. In terms of biological role, RNA-dependent RNA polymerase which replicates the viral genome. Catalyzes the transcription of fully conservative plus-strand genomic RNAs that are extruded from the virion into the cytoplasm where they function as mRNAs for translation of viral proteins and also as substrates for encapsidation to form new virions. Once encapsidated, the positive strand is converted to dsRNA by the RNA-directed RNA polymerase. Displays ssRNA-binding activity. This is Probable RNA-directed RNA polymerase (ORF3) from Leishmania major (LRV-1-1).